Consider the following 283-residue polypeptide: Phosphatidylserine decarboxylase proenzyme (283 aa).

Active-site charge relay system; for autoendoproteolytic cleavage activity residues include Asp-90, His-143, and Ser-248. Ser-248 (schiff-base intermediate with substrate; via pyruvic acid; for decarboxylase activity) is an active-site residue. Ser-248 carries the pyruvic acid (Ser); by autocatalysis modification.

It belongs to the phosphatidylserine decarboxylase family. PSD-B subfamily. Prokaryotic type I sub-subfamily. Heterodimer of a large membrane-associated beta subunit and a small pyruvoyl-containing alpha subunit. The cofactor is pyruvate. In terms of processing, is synthesized initially as an inactive proenzyme. Formation of the active enzyme involves a self-maturation process in which the active site pyruvoyl group is generated from an internal serine residue via an autocatalytic post-translational modification. Two non-identical subunits are generated from the proenzyme in this reaction, and the pyruvate is formed at the N-terminus of the alpha chain, which is derived from the carboxyl end of the proenzyme. The autoendoproteolytic cleavage occurs by a canonical serine protease mechanism, in which the side chain hydroxyl group of the serine supplies its oxygen atom to form the C-terminus of the beta chain, while the remainder of the serine residue undergoes an oxidative deamination to produce ammonia and the pyruvoyl prosthetic group on the alpha chain. During this reaction, the Ser that is part of the protease active site of the proenzyme becomes the pyruvoyl prosthetic group, which constitutes an essential element of the active site of the mature decarboxylase.

It localises to the cell membrane. The enzyme catalyses a 1,2-diacyl-sn-glycero-3-phospho-L-serine + H(+) = a 1,2-diacyl-sn-glycero-3-phosphoethanolamine + CO2. It functions in the pathway phospholipid metabolism; phosphatidylethanolamine biosynthesis; phosphatidylethanolamine from CDP-diacylglycerol: step 2/2. Functionally, catalyzes the formation of phosphatidylethanolamine (PtdEtn) from phosphatidylserine (PtdSer). This is Phosphatidylserine decarboxylase proenzyme from Francisella tularensis subsp. novicida (strain U112).